Reading from the N-terminus, the 63-residue chain is ATP synthase F(0) complex subunit 8 (63 aa).

The chain crosses the membrane as a helical span at residues 8–24 (MWLLTILSMLLTLFVLF). The residue at position 57 (Lys57) is an N6-acetyllysine.

This sequence belongs to the ATPase protein 8 family. In terms of assembly, component of the ATP synthase complex composed at least of ATP5F1A/subunit alpha, ATP5F1B/subunit beta, ATP5MC1/subunit c (homooctomer), MT-ATP6/subunit a, MT-ATP8/subunit 8, ATP5ME/subunit e, ATP5MF/subunit f, ATP5MG/subunit g, ATP5MK/subunit k, ATP5MJ/subunit j, ATP5F1C/subunit gamma, ATP5F1D/subunit delta, ATP5F1E/subunit epsilon, ATP5PF/subunit F6, ATP5PB/subunit b, ATP5PD/subunit d, ATP5PO/subunit OSCP. ATP synthase complex consists of a soluble F(1) head domain (subunits alpha(3) and beta(3)) - the catalytic core - and a membrane F(0) domain - the membrane proton channel (subunits c, a, 8, e, f, g, k and j). These two domains are linked by a central stalk (subunits gamma, delta, and epsilon) rotating inside the F1 region and a stationary peripheral stalk (subunits F6, b, d, and OSCP). Interacts with PRICKLE3.

The protein localises to the mitochondrion membrane. Subunit 8, of the mitochondrial membrane ATP synthase complex (F(1)F(0) ATP synthase or Complex V) that produces ATP from ADP in the presence of a proton gradient across the membrane which is generated by electron transport complexes of the respiratory chain. ATP synthase complex consist of a soluble F(1) head domain - the catalytic core - and a membrane F(1) domain - the membrane proton channel. These two domains are linked by a central stalk rotating inside the F(1) region and a stationary peripheral stalk. During catalysis, ATP synthesis in the catalytic domain of F(1) is coupled via a rotary mechanism of the central stalk subunits to proton translocation. In vivo, can only synthesize ATP although its ATP hydrolase activity can be activated artificially in vitro. Part of the complex F(0) domain. The chain is ATP synthase F(0) complex subunit 8 from Balaenoptera physalus (Fin whale).